Consider the following 66-residue polypeptide: Small ribosomal subunit protein bS21A (66 aa).

The span at 34 to 46 (KHYEKPSVKKKRK) shows a compositional bias: basic residues. The tract at residues 34 to 66 (KHYEKPSVKKKRKQMEAERKRRKAQRFRKPDRD) is disordered.

It belongs to the bacterial ribosomal protein bS21 family.

This chain is Small ribosomal subunit protein bS21A, found in Geobacter sulfurreducens (strain ATCC 51573 / DSM 12127 / PCA).